Consider the following 336-residue polypeptide: DNA repair protein RAD51 homolog A (336 aa).

The HhH domain occupies 45–74 (TVEAVAYAPKKELLNIKGISEAKAEKILAE). ATP is bound at residue 124-131 (GEFRTGKT). The Nuclear export signal signature appears at 242-257 (LARFLRMLLRLADEFG).

It belongs to the RecA family. RAD51 subfamily. Forms linear homooligomers, giving rise to a RAD51 nucleoprotein filament, which is essential for strand-pairing reactions during DNA recombination.

The protein localises to the nucleus. It is found in the cytoplasm. Its subcellular location is the chromosome. In terms of biological role, plays an important role in homologous strand exchange, a key step in DNA repair through homologous recombination (HR). Binds to single-stranded DNA in an ATP-dependent manner to form nucleoprotein filaments which are essential for the homology search and strand exchange. Catalyzes the recognition of homology and strand exchange between homologous DNA partners to form a joint molecule between a processed DNA break and the repair template. Recruited to resolve stalled replication forks during replication stress. Also involved in interstrand cross-link repair. In Xenopus laevis (African clawed frog), this protein is DNA repair protein RAD51 homolog A (rad51-a).